The primary structure comprises 263 residues: Endonuclease 8 (263 aa).

The active-site Schiff-base intermediate with DNA is Pro-2. Glu-3 (proton donor) is an active-site residue. Residue Lys-53 is the Proton donor; for beta-elimination activity of the active site. DNA contacts are provided by Gln-70, Arg-125, and Asn-169. The segment at Lys-229 to Lys-263 adopts an FPG-type zinc-finger fold. Arg-253 serves as the catalytic Proton donor; for delta-elimination activity.

The protein belongs to the FPG family. Requires Zn(2+) as cofactor.

It carries out the reaction 2'-deoxyribonucleotide-(2'-deoxyribose 5'-phosphate)-2'-deoxyribonucleotide-DNA = a 3'-end 2'-deoxyribonucleotide-(2,3-dehydro-2,3-deoxyribose 5'-phosphate)-DNA + a 5'-end 5'-phospho-2'-deoxyribonucleoside-DNA + H(+). Its function is as follows. Involved in base excision repair of DNA damaged by oxidation or by mutagenic agents. Acts as a DNA glycosylase that recognizes and removes damaged bases. Has a preference for oxidized pyrimidines, such as thymine glycol, 5,6-dihydrouracil and 5,6-dihydrothymine. Has AP (apurinic/apyrimidinic) lyase activity and introduces nicks in the DNA strand. Cleaves the DNA backbone by beta-delta elimination to generate a single-strand break at the site of the removed base with both 3'- and 5'-phosphates. The sequence is that of Endonuclease 8 from Salmonella enteritidis PT4 (strain P125109).